We begin with the raw amino-acid sequence, 232 residues long: U2 small nuclear ribonucleoprotein B'' (232 aa).

The RRM 1 domain maps to 10 to 89 (QTVYLRNLNE…KRMRVQYAKT (80 aa)). The tract at residues 92 to 159 (DCLATEDGST…QEPPAPPNNI (68 aa)) is disordered. Residues 108 to 123 (KKQEEKAAEKKRRAEE) are compositionally biased toward basic and acidic residues. Residues 127–151 (SGPNAAAQSNGTGYQASRLGKTSQE) are compositionally biased toward polar residues. The region spanning 158–232 (NILFIQNLPA…NPMAISYAKK (75 aa)) is the RRM 2 domain.

This sequence belongs to the RRM U1 A/B'' family. In terms of assembly, component of the spliceosome where it is associated with snRNP U2.

It is found in the nucleus. Its subcellular location is the cajal body. It localises to the nucleoplasm. The protein resides in the cytoplasm. Its function is as follows. Involved in nuclear pre-mRNA splicing. This is U2 small nuclear ribonucleoprotein B'' from Oryza sativa subsp. indica (Rice).